The primary structure comprises 485 residues: NADH-quinone oxidoreductase subunit N (485 aa).

14 helical membrane passes run 10–30 (AMLPLLIVGLTVVVVMLSIAW), 35–55 (FINATLTVIGLNLALLSLYFV), 75–95 (FYIGLVIVASLATSTFAYPWL), 104–124 (EFYLLVLIATMGGILLASANH), 125–145 (LASLFLGIELISLPLFGLIGY), 159–179 (YMLLSAAASSFLLFGMALLYA), 203–223 (ILAGLGMMIVGLGFKLSLVPF), 235–255 (PAPVSTFLATASKIAIFAVVM), 271–291 (LVLSLIAVASILFGNLMAISQ), 297–317 (LLGYSSIAHLGYLLIALVAVQ), 327–347 (GVYLAGYLFSSLGAFGVVSLM), 374–394 (AVMTVMMLSLAGIPMTLGFIG), 408–427 (WWLTGAVVLGSAIGLYYYLR), and 449–469 (ALTAGGVVVLISAILVLVLGI).

It belongs to the complex I subunit 2 family. As to quaternary structure, NDH-1 is composed of 13 different subunits. Subunits NuoA, H, J, K, L, M, N constitute the membrane sector of the complex.

It localises to the cell inner membrane. It carries out the reaction a quinone + NADH + 5 H(+)(in) = a quinol + NAD(+) + 4 H(+)(out). NDH-1 shuttles electrons from NADH, via FMN and iron-sulfur (Fe-S) centers, to quinones in the respiratory chain. The immediate electron acceptor for the enzyme in this species is believed to be ubiquinone. Couples the redox reaction to proton translocation (for every two electrons transferred, four hydrogen ions are translocated across the cytoplasmic membrane), and thus conserves the redox energy in a proton gradient. The chain is NADH-quinone oxidoreductase subunit N from Yersinia enterocolitica serotype O:8 / biotype 1B (strain NCTC 13174 / 8081).